The sequence spans 56 residues: Per os infectivity factor AC110 (56 aa).

In terms of biological role, plays an essential role in the process of oral infection. May participate in the crossing of occlusion-derived virions through the host peritrophic membrane during oral infection. The protein is Per os infectivity factor AC110 of Autographa californica nuclear polyhedrosis virus (AcMNPV).